We begin with the raw amino-acid sequence, 551 residues long: Cytochrome bc1 complex cytochrome b subunit (551 aa).

A helical membrane pass occupies residues Phe-44–Leu-64. 2 residues coordinate heme: His-113 and His-127. 3 helical membrane passes run Ala-117–Phe-137, Trp-145–Met-165, and Val-188–Ile-208. Heme is bound by residues His-215 and His-230. 5 consecutive transmembrane segments (helical) span residues Ile-216–Phe-236, Ser-265–Ile-285, Pro-334–Leu-354, Ile-380–Ile-400, and Ile-417–Leu-437. A disordered region spans residues Ala-532–His-551.

This sequence belongs to the cytochrome b family. As to quaternary structure, the cytochrome bc1 complex is composed of a cytochrome b (QcrB), the Rieske iron-sulfur protein (QcrA) and a diheme cytochrome c (QcrC) subunit. Requires heme as cofactor.

It is found in the cell membrane. The enzyme catalyses a quinol + 2 Fe(III)-[cytochrome c](out) = a quinone + 2 Fe(II)-[cytochrome c](out) + 2 H(+)(out). In terms of biological role, cytochrome b subunit of the cytochrome bc1 complex, an essential component of the respiratory electron transport chain required for ATP synthesis. The bc1 complex catalyzes the oxidation of ubiquinol and the reduction of cytochrome c in the respiratory chain. The bc1 complex operates through a Q-cycle mechanism that couples electron transfer to generation of the proton gradient that drives ATP synthesis. The cytochrome b subunit contains two ubiquinol reactive sites: the oxidation (QP) site and the reduction (QN) site. The chain is Cytochrome bc1 complex cytochrome b subunit (qcrB) from Mycobacterium leprae (strain TN).